A 466-amino-acid chain; its full sequence is NADH-quinone oxidoreductase subunit N (466 aa).

Transmembrane regions (helical) follow at residues 9–29 (LIPL…GAIV), 33–53 (CGTV…MLAP), 68–88 (PFTR…LLLA), 100–120 (EEYP…ASAA), 122–142 (FLTL…LVAY), 157–177 (LLMG…LYGA), 190–210 (SAAG…GLAF), 232–252 (VVAF…LLIL), 263–283 (APLW…ALLQ), 289–309 (MLAY…LSGG), 314–334 (AAAF…GALA), 359–379 (GVVL…VGFV), 394–416 (APLA…RVVV), and 438–458 (LSLG…GPLF).

It belongs to the complex I subunit 2 family. As to quaternary structure, NDH-1 is composed of 14 different subunits. Subunits NuoA, H, J, K, L, M, N constitute the membrane sector of the complex.

It localises to the cell inner membrane. The catalysed reaction is a quinone + NADH + 5 H(+)(in) = a quinol + NAD(+) + 4 H(+)(out). In terms of biological role, NDH-1 shuttles electrons from NADH, via FMN and iron-sulfur (Fe-S) centers, to quinones in the respiratory chain. The immediate electron acceptor for the enzyme in this species is believed to be ubiquinone. Couples the redox reaction to proton translocation (for every two electrons transferred, four hydrogen ions are translocated across the cytoplasmic membrane), and thus conserves the redox energy in a proton gradient. The protein is NADH-quinone oxidoreductase subunit N of Geobacter metallireducens (strain ATCC 53774 / DSM 7210 / GS-15).